The primary structure comprises 362 residues: Chorismate synthase (362 aa).

Position 47 (Arg47) interacts with NADP(+). Residues 124-126, Gly286, 301-305, and Arg327 each bind FMN; these read RAS and KPTAT.

The protein belongs to the chorismate synthase family. Homotetramer. FMNH2 serves as cofactor.

The enzyme catalyses 5-O-(1-carboxyvinyl)-3-phosphoshikimate = chorismate + phosphate. The protein operates within metabolic intermediate biosynthesis; chorismate biosynthesis; chorismate from D-erythrose 4-phosphate and phosphoenolpyruvate: step 7/7. Its function is as follows. Catalyzes the anti-1,4-elimination of the C-3 phosphate and the C-6 proR hydrogen from 5-enolpyruvylshikimate-3-phosphate (EPSP) to yield chorismate, which is the branch point compound that serves as the starting substrate for the three terminal pathways of aromatic amino acid biosynthesis. This reaction introduces a second double bond into the aromatic ring system. The sequence is that of Chorismate synthase from Prochlorococcus marinus (strain SARG / CCMP1375 / SS120).